Consider the following 143-residue polypeptide: Large ribosomal subunit protein uL11 (143 aa).

The protein belongs to the universal ribosomal protein uL11 family. As to quaternary structure, part of the ribosomal stalk of the 50S ribosomal subunit. Interacts with L10 and the large rRNA to form the base of the stalk. L10 forms an elongated spine to which L12 dimers bind in a sequential fashion forming a multimeric L10(L12)X complex. One or more lysine residues are methylated.

Its function is as follows. Forms part of the ribosomal stalk which helps the ribosome interact with GTP-bound translation factors. The sequence is that of Large ribosomal subunit protein uL11 from Thioalkalivibrio sulfidiphilus (strain HL-EbGR7).